Reading from the N-terminus, the 329-residue chain is 4-hydroxythreonine-4-phosphate dehydrogenase (329 aa).

Substrate contacts are provided by His-136 and Thr-137. A divalent metal cation-binding residues include His-166, His-211, and His-266. Positions 274, 283, and 292 each coordinate substrate.

It belongs to the PdxA family. Homodimer. The cofactor is Zn(2+). Mg(2+) is required as a cofactor. It depends on Co(2+) as a cofactor.

It is found in the cytoplasm. The catalysed reaction is 4-(phosphooxy)-L-threonine + NAD(+) = 3-amino-2-oxopropyl phosphate + CO2 + NADH. Its pathway is cofactor biosynthesis; pyridoxine 5'-phosphate biosynthesis; pyridoxine 5'-phosphate from D-erythrose 4-phosphate: step 4/5. Its function is as follows. Catalyzes the NAD(P)-dependent oxidation of 4-(phosphooxy)-L-threonine (HTP) into 2-amino-3-oxo-4-(phosphooxy)butyric acid which spontaneously decarboxylates to form 3-amino-2-oxopropyl phosphate (AHAP). The chain is 4-hydroxythreonine-4-phosphate dehydrogenase from Salmonella typhimurium (strain LT2 / SGSC1412 / ATCC 700720).